Here is a 330-residue protein sequence, read N- to C-terminus: Biotin synthase (330 aa).

One can recognise a Radical SAM core domain in the interval 42-268 (YYGRKVKLNM…INPSKEIRIA (227 aa)). The [4Fe-4S] cluster site is built by Cys60, Cys64, and Cys67. [2Fe-2S] cluster-binding residues include Cys103, Cys136, Cys196, and Arg266.

It belongs to the radical SAM superfamily. Biotin synthase family. As to quaternary structure, homodimer. The cofactor is [4Fe-4S] cluster. It depends on [2Fe-2S] cluster as a cofactor.

It carries out the reaction (4R,5S)-dethiobiotin + (sulfur carrier)-SH + 2 reduced [2Fe-2S]-[ferredoxin] + 2 S-adenosyl-L-methionine = (sulfur carrier)-H + biotin + 2 5'-deoxyadenosine + 2 L-methionine + 2 oxidized [2Fe-2S]-[ferredoxin]. The protein operates within cofactor biosynthesis; biotin biosynthesis; biotin from 7,8-diaminononanoate: step 2/2. Its function is as follows. Catalyzes the conversion of dethiobiotin (DTB) to biotin by the insertion of a sulfur atom into dethiobiotin via a radical-based mechanism. In Macrococcus caseolyticus (strain JCSC5402) (Macrococcoides caseolyticum), this protein is Biotin synthase.